The chain runs to 1266 residues: Intermembrane phospholipid transporter YhdP (1266 aa).

At 1 to 5 (MRRLP) the chain is on the cytoplasmic side. A helical transmembrane segment spans residues 6 to 26 (GILLLTGAALVVIAALLVSGL). Topologically, residues 27-1266 (RIALPHLDAW…LRQPRKEKAQ (1240 aa)) are periplasmic. A P-helix region spans residues 94 to 103 (VWQSLLHMRW). Residues 1121 to 1144 (HAGQLLRLLSVDALMRKLRFDFRD) are C-helix_2. The C-helix_1 stretch occupies residues 1203 to 1237 (ISATVGVAAAFAVNPIVGAAVFAASKVLGPLWSKV).

The protein localises to the cell inner membrane. Involved in outer membrane lipid homeostasis. Likely transports phospholipids between the inner membrane and the outer membrane. It would provide a bridge-like structure that protects phospholipids as they travel across the periplasm. The phosphate-containing molecules are captured along the length of a hydrophobic groove that is continuous along all but the extreme N-terminus of the protein. It also appears to control, directly or indirectly, levels of cyclic enterobacterial common antigen (cyclic ECA), a soluble cyclic ECA molecule present in the periplasm. In terms of biological role, tamB, YdbH and YhdP are redundant, but not equivalent, in performing an essential function for growth and maintaining lipid homeostasis in the outer membrane. The transport functions of TamB and YhdP could be differentiated according to the fatty acid saturation state of the phospholipids, with TamB transporting more unsaturated phospholipids and YhdP more saturated phospholipids. Any of these three proteins is sufficient for growth. The protein is Intermembrane phospholipid transporter YhdP (yhdP) of Escherichia coli (strain K12).